The chain runs to 675 residues: Gastrula zinc finger protein xFG20-1 (675 aa).

10 C2H2-type zinc fingers span residues 62–84 (FTCTECGKTFTRKPNYESHIRAH), 90–112 (FSCMVCDKAFAWKSNLLVHYSVH), 118–140 (FSCTECDKTFSNKAQLEKHLRVH), 146–168 (YSCEQCGKSFAHKCVLDSHQRTH), 174–196 (FSCTECGKKFSQRGNLHKHLKTH), 202–224 (HLCAECGKTFSFKSTLLEHQKIH), 257–279 (FPCTECGEIFSNEHELLTHQSTH), 286–308 (FPCTKCWGIFSNEHELRTHQSTH), 344–366 (LPCTECGGTFTNEQELLAHQSTH), and 373–395 (LPCTECGEIFSDEHELLTHQSTH). The tract at residues 302-325 (RTHQSTHTEGQKSLPSTESGGTFS) is disordered. Residues 304–325 (HQSTHTEGQKSLPSTESGGTFS) are compositionally biased toward polar residues. Over residues 390 to 407 (THQSTHTSPSTEFGVQTT) the composition is skewed to polar residues. The segment at 390-423 (THQSTHTSPSTEFGVQTTEDNHQSPSKDHTGEKP) is disordered. A compositionally biased stretch (basic and acidic residues) spans 408 to 421 (EDNHQSPSKDHTGE). C2H2-type zinc fingers lie at residues 424–446 (FSCSECGKSFFYKSVLKDHLVVH), 452–474 (YHCIECGRSYTHQSSLKSHQRTH), 480–501 (FSCNLCDKLSIISKLRLHYRVH), 507–529 (YPCTECDKTFTKKEQLESHYKVH), 535–557 (YPCQQCGKSFSHKSVLKLHLRTH), 563–585 (FSCTECGKTFTRKPNYESHLTTH), 591–613 (FSCTECGKEFAWKRNLEAHYKMH), and 619–642 (FTCTECGKTFTWKSNLRSHYTTVH).

It belongs to the krueppel C2H2-type zinc-finger protein family.

It localises to the nucleus. May be involved in transcriptional regulation. The polypeptide is Gastrula zinc finger protein xFG20-1 (Xenopus laevis (African clawed frog)).